We begin with the raw amino-acid sequence, 49 residues long: ASTQGISEDLYNRLVEMATIIQAAYADLAIYNAQTDINGASGNQAFASY.

The protein belongs to the AB hydrolase superfamily. FaeA family.

It is found in the secreted. The catalysed reaction is feruloyl-polysaccharide + H2O = ferulate + polysaccharide.. Functionally, involved in degradation of plant cell walls. Hydrolyzes the feruloyl-arabinose ester bond in arabinoxylans as well as the feruloyl-galactose and feruloyl-arabinose ester bonds in pectin. Active against methyl esters of sinapate (MSA), but not caffeate (MCA). The sequence is that of Feruloyl esterase A from Talaromyces stipitatus (strain ATCC 10500 / CBS 375.48 / QM 6759 / NRRL 1006) (Penicillium stipitatum).